Consider the following 572-residue polypeptide: Urease subunit alpha (572 aa).

The 437-residue stretch at 136 to 572 (GGIDTHIHFI…VPLGQRYFLF (437 aa)) folds into the Urease domain. Ni(2+)-binding residues include His-141, His-143, and Lys-224. Position 224 is an N6-carboxylysine (Lys-224). His-226 contacts substrate. Ni(2+)-binding residues include His-253 and His-279. His-327 acts as the Proton donor in catalysis. Asp-367 is a binding site for Ni(2+).

The protein belongs to the metallo-dependent hydrolases superfamily. Urease alpha subunit family. Heterotrimer of UreA (gamma), UreB (beta) and UreC (alpha) subunits. Three heterotrimers associate to form the active enzyme. Ni cation serves as cofactor. In terms of processing, carboxylation allows a single lysine to coordinate two nickel ions.

It is found in the cytoplasm. It catalyses the reaction urea + 2 H2O + H(+) = hydrogencarbonate + 2 NH4(+). It participates in nitrogen metabolism; urea degradation; CO(2) and NH(3) from urea (urease route): step 1/1. This is Urease subunit alpha from Haemophilus influenzae (strain ATCC 51907 / DSM 11121 / KW20 / Rd).